The chain runs to 497 residues: DNA-dependent metalloprotease SPRTN (497 aa).

The residue at position 1 (Met1) is an N-acetylmethionine. The SprT-like domain maps to 46-213 (LQALFLQFND…KTCGGTYIKI (168 aa)). His112 lines the Zn(2+) pocket. Residue Glu113 is part of the active site. Zn(2+) contacts are provided by His116 and His131. Lys231 is subject to N6-acetyllysine. Residues 254–262 (FSGKGYVLG) carry the SHP-box motif. Position 269 is a phosphoserine (Ser269). Lys304 participates in a covalent cross-link: Glycyl lysine isopeptide (Lys-Gly) (interchain with G-Cter in SUMO2). The PIP-box motif lies at 326 to 333 (QSVLSSYF). Residue Lys342 forms a Glycyl lysine isopeptide (Lys-Gly) (interchain with G-Cter in SUMO2); alternate linkage. Lys342 is covalently cross-linked (Glycyl lysine isopeptide (Lys-Gly) (interchain with G-Cter in ubiquitin); alternate). Positions 344–459 (FRNVNGSPVK…ASAPQSLSSQ (116 aa)) are disordered. The segment covering 347 to 356 (VNGSPVKNGT) has biased composition (polar residues). A Glycyl lysine isopeptide (Lys-Gly) (interchain with G-Cter in SUMO2) cross-link involves residue Lys362. Positions 383–404 (TSKVTAPASATVTSAAGTSATI) are enriched in low complexity. Position 384 is a phosphoserine (Ser384). Residues 413-424 (DQFLNKRPRLED) carry the Nuclear localization signal motif. Positions 420–432 (PRLEDRTALDTIK) are enriched in basic and acidic residues. Lys432 participates in a covalent cross-link: Glycyl lysine isopeptide (Lys-Gly) (interchain with G-Cter in SUMO2). The segment covering 442–459 (RSSSQPTAASAPQSLSSQ) has biased composition (low complexity). The UBZ4-type zinc-finger motif lies at 462-489 (LVNCPVCQGVVVESQINEHLDRCLEGNK). 4 residues coordinate Zn(2+): Cys465, Cys468, His480, and Cys484.

The protein belongs to the Spartan family. Homodimer. Interacts (VIA PIP-box) with PCNA (when ubiquitinated). Interacts (via its SHP-box) with VCP/p97. Interacts with RAD18. Interacts with KCTD13 and POLD3. Requires Zn(2+) as cofactor. Autocatalytically cleaved in response to double-stranded DNA-binding: autocatalytic cleavage takes place in trans and leads to inactivation. Post-translationally, monoubiquitinated; monoubiquitination promotes exclusion from chromatin. Deubiquitinated by VCPIP1: deubiquitination is required for subsequent acetylation and recruitment to chromatin and DNA damage sites. In terms of processing, acetylated following deubiquitination by VCPIP1, leading to recruitment to chromatin and DNA damage sites. Phosphorylation by CHEK1 promotes recruitment to chromatin.

Its subcellular location is the nucleus. It is found in the chromosome. With respect to regulation, DNA-binding activates the protease activity: single-stranded DNA-binding specifically activates ability to cleave covalent DNA-protein cross-links (DPCs). In contrast, double-stranded DNA-binding specifically activates autocatalytic cleavage, and subsequent inactivation. In terms of biological role, DNA-dependent metalloendopeptidase that mediates the proteolytic cleavage of covalent DNA-protein cross-links (DPCs) during DNA synthesis, thereby playing a key role in maintaining genomic integrity. DPCs are highly toxic DNA lesions that interfere with essential chromatin transactions, such as replication and transcription, and which are induced by reactive agents, such as UV light or formaldehyde. Associates with the DNA replication machinery and specifically removes DPCs during DNA synthesis. Catalyzes proteolytic cleavage of the HMCES DNA-protein cross-link following unfolding by the BRIP1/FANCJ helicase. Acts as a pleiotropic protease for DNA-binding proteins cross-linked with DNA, such as TOP1, TOP2A, histones H3 and H4. Mediates degradation of DPCs that are not ubiquitinated, while it is not able to degrade ubiquitinated DPCs. SPRTN activation requires polymerase collision with DPCs followed by helicase bypass of DPCs. Involved in recruitment of VCP/p97 to sites of DNA damage. Also acts as an activator of CHEK1 during normal DNA replication by mediating proteolytic cleavage of CHEK1, thereby promoting CHEK1 removal from chromatin and subsequent activation. Does not activate CHEK1 in response to DNA damage. May also act as a 'reader' of ubiquitinated PCNA: recruited to sites of UV damage and interacts with ubiquitinated PCNA and RAD18, the E3 ubiquitin ligase that monoubiquitinates PCNA. Facilitates chromatin association of RAD18 and is required for efficient PCNA monoubiquitination, promoting a feed-forward loop to enhance PCNA ubiquitination and translesion DNA synthesis. The polypeptide is DNA-dependent metalloprotease SPRTN (Mus musculus (Mouse)).